Consider the following 201-residue polypeptide: 5'(3')-deoxyribonucleotidase, cytosolic type (201 aa).

The active-site Nucleophile is the aspartate 10. Mg(2+)-binding residues include aspartate 10 and aspartate 12. The Proton donor role is filled by aspartate 12. Substrate contacts are provided by phenylalanine 18, phenylalanine 44, tyrosine 65, threonine 99, and lysine 134. Aspartate 145 serves as a coordination point for Mg(2+). Serine 182 is modified (phosphoserine).

It belongs to the 5'(3')-deoxyribonucleotidase family. As to quaternary structure, homodimer. Mg(2+) is required as a cofactor. In terms of tissue distribution, detected in skeletal muscle, heart and pancreas.

The protein resides in the cytoplasm. In terms of biological role, dephosphorylates the 5' and 2'(3')-phosphates of deoxyribonucleotides, with a preference for dUMP and dTMP, intermediate activity towards dGMP, and low activity towards dCMP and dAMP. The protein is 5'(3')-deoxyribonucleotidase, cytosolic type (NT5C) of Homo sapiens (Human).